A 337-amino-acid polypeptide reads, in one-letter code: DNA-directed RNA polymerase subunit alpha (337 aa).

The interval 1–233 is alpha N-terminal domain (alpha-NTD); it reads MVREKVTVST…DLFIPFLHME (233 aa). Residues 265-337 are alpha C-terminal domain (alpha-CTD); the sequence is KKIALKSIFI…FVIDLAKNKF (73 aa).

This sequence belongs to the RNA polymerase alpha chain family. As to quaternary structure, in plastids the minimal PEP RNA polymerase catalytic core is composed of four subunits: alpha, beta, beta', and beta''. When a (nuclear-encoded) sigma factor is associated with the core the holoenzyme is formed, which can initiate transcription.

It is found in the plastid. The protein localises to the chloroplast. It catalyses the reaction RNA(n) + a ribonucleoside 5'-triphosphate = RNA(n+1) + diphosphate. Its function is as follows. DNA-dependent RNA polymerase catalyzes the transcription of DNA into RNA using the four ribonucleoside triphosphates as substrates. The chain is DNA-directed RNA polymerase subunit alpha from Nicotiana sylvestris (Wood tobacco).